The chain runs to 221 residues: Translation initiation factor 6 (221 aa).

This sequence belongs to the eIF-6 family.

Functionally, binds to the 50S ribosomal subunit and prevents its association with the 30S ribosomal subunit to form the 70S initiation complex. This Methanocella arvoryzae (strain DSM 22066 / NBRC 105507 / MRE50) protein is Translation initiation factor 6.